The primary structure comprises 358 residues: Malate dehydrogenase 2, glyoxysomal (358 aa).

The transit peptide at 1–38 directs the protein to the glyoxysome; sequence MEFRGDANKRIAMISAHLQPSFTPQMEAKNSVMGRENC. NAD(+)-binding positions include 53–59 and Asp-79; that span reads GAAGGIG. Substrate-binding residues include Arg-126 and Arg-132. Residues Asn-139 and 162–164 each bind NAD(+); that span reads ISN. Residues Asn-164 and Arg-198 each coordinate substrate. His-222 acts as the Proton acceptor in catalysis. Position 273 (Met-273) interacts with NAD(+).

Belongs to the LDH/MDH superfamily. MDH type 1 family. In terms of assembly, homodimer.

It localises to the glyoxysome. The catalysed reaction is (S)-malate + NAD(+) = oxaloacetate + NADH + H(+). The protein is Malate dehydrogenase 2, glyoxysomal (MDH2) of Brassica napus (Rape).